The chain runs to 140 residues: MVRRVVATGTFDILHPGHVLYLCEARKHGDELWVIVARESTIKHKRKPLIPEEQRLFMVQSLKCVDHAVLGSETDMFEPIRQIQPEVIAIGFNQHWNENELKKQLAERGIKAEIVRIQTSDHSPYASSRTIRQKIKESDP.

Residues 10–11 (TF), 15–18 (HPGH), and N93 contribute to the ATP site.

It belongs to the archaeal FAD synthase family. In terms of assembly, homodimer. The cofactor is a divalent metal cation.

The enzyme catalyses FMN + ATP + H(+) = FAD + diphosphate. It participates in cofactor biosynthesis; FAD biosynthesis; FAD from FMN: step 1/1. In terms of biological role, catalyzes the transfer of the AMP portion of ATP to flavin mononucleotide (FMN) to produce flavin adenine dinucleotide (FAD) coenzyme. This chain is FAD synthase, found in Methanocella arvoryzae (strain DSM 22066 / NBRC 105507 / MRE50).